The following is a 1372-amino-acid chain: Polysaccharide lyase 8 family protein HylA (1372 aa).

Residues 1 to 25 (MIKKIIVVVAFMLTGFSLTAMSASA) form the signal peptide. Residues 63 to 172 (DGDETTRWSA…SIISFEAYEK (110 aa)) enclose the F5/8 type C domain. One can recognise a BIG2 domain in the interval 183 to 242 (TENLTISEKRKQQLAFEVSPAGVDITEDQIEWSSSDPTIVTVDQTGNLTAVKSGEAKVTV). Catalysis depends on residues His487, Tyr496, and Arg550. 4 FIVAR domains span residues 1014-1075 (KEAL…VKQL), 1084-1146 (DKTN…VKQL), 1155-1217 (DKTN…VKQL), and 1226-1288 (DKTN…VKRL). The interval 1288 to 1336 (LTLKNSGENKKEQKNGGNNGHLNTSTGVDQTGTKQVKPSSQGGFRKASQ) is disordered. Positions 1308 to 1329 (HLNTSTGVDQTGTKQVKPSSQG) are enriched in polar residues. Residues 1338–1342 (LPSTG) carry the LPXTG sorting signal motif. At Thr1341 the chain carries Pentaglycyl murein peptidoglycan amidated threonine. Residues 1342 to 1372 (GEKKSIALVIIGLLVIASGCLLVFRKSKSKK) constitute a propeptide, removed by sortase.

This sequence belongs to the polysaccharide lyase 8 family.

It is found in the secreted. Its subcellular location is the cell wall. In terms of biological role, has a very modest degradation activity against heparin sodium salt (HS) in vitro. Involved in the pathogenesis of vancomycin-resistant E.faecalis infections. The chain is Polysaccharide lyase 8 family protein HylA from Enterococcus faecalis (strain ATCC 700802 / V583).